The sequence spans 510 residues: Mitogen-activated protein kinase 9 (510 aa).

In terms of domain architecture, Protein kinase spans Tyr-23–Phe-314. ATP is bound by residues Ile-29–Val-37 and Lys-52. Asp-149 functions as the Proton acceptor in the catalytic mechanism. A Phosphothreonine modification is found at Thr-185. The TXY motif lies at Thr-185–Tyr-187. Residue Tyr-187 is modified to Phosphotyrosine. Thr-190 carries the post-translational modification Phosphothreonine. The tract at residues Asn-393–Thr-461 is disordered. Basic and acidic residues predominate over residues Leu-410–Asn-431. Residues Ser-433–Thr-461 are compositionally biased toward polar residues.

The protein belongs to the protein kinase superfamily. CMGC Ser/Thr protein kinase family. MAP kinase subfamily. In terms of processing, dually phosphorylated on Thr-185 and Tyr-187, which activates the enzyme.

The enzyme catalyses L-seryl-[protein] + ATP = O-phospho-L-seryl-[protein] + ADP + H(+). It catalyses the reaction L-threonyl-[protein] + ATP = O-phospho-L-threonyl-[protein] + ADP + H(+). Activated by threonine and tyrosine phosphorylation. In Arabidopsis thaliana (Mouse-ear cress), this protein is Mitogen-activated protein kinase 9 (MPK9).